We begin with the raw amino-acid sequence, 292 residues long: Glyoxylase B2 (292 aa).

Positions 72, 74, 76, 77, 148, and 166 each coordinate Zn(2+). Residues 175–181 (TARCDFP), 208–210 (HDY), and 284–287 (KIPL) each bind substrate. A Zn(2+)-binding site is contributed by histidine 208.

Belongs to the metallo-beta-lactamase superfamily. Glyoxalase II family. The cofactor is Zn(2+).

This is Glyoxylase B2 (gloB2) from Dictyostelium discoideum (Social amoeba).